We begin with the raw amino-acid sequence, 201 residues long: CASP-like protein 2D1 (201 aa).

Over 1-26 (MRSGEGSTAAAAAAEEEKVKVAAPFR) the chain is Cytoplasmic. A helical membrane pass occupies residues 27-47 (LAELGLRVCAVPLAVASVWEM). At 48–70 (ATNKQVDETYGEVRFSDLSGFRY) the chain is on the extracellular side. Residues 71 to 91 (LVWINAITAAYSVASILLSSC) form a helical membrane-spanning segment. Residues 92–98 (RFITRFD) lie on the Cytoplasmic side of the membrane. A helical membrane pass occupies residues 99–119 (WLIFILDQASAYLLLTSASAA). Over 120–148 (AEVVYLAREGDREVSWGEVCSYFGRFCGA) the chain is Extracellular. Residues 149 to 169 (ATVSVALNAAALLCFMALSLI) traverse the membrane as a helical segment. Topologically, residues 170-201 (SAFRVFTKFNPPSQSNSKQQLSQEQGKPVVSG) are cytoplasmic. A compositionally biased stretch (polar residues) spans 180-194 (PPSQSNSKQQLSQEQ). The disordered stretch occupies residues 180 to 201 (PPSQSNSKQQLSQEQGKPVVSG).

It belongs to the Casparian strip membrane proteins (CASP) family. In terms of assembly, homodimer and heterodimers.

The protein resides in the cell membrane. In Oryza sativa subsp. indica (Rice), this protein is CASP-like protein 2D1.